The chain runs to 802 residues: LPS-assembly protein LptD (802 aa).

The signal sequence occupies residues 1 to 29 (MARLFSLKPLVLALGFCFGTHCAAADAVA).

Belongs to the LptD family. As to quaternary structure, component of the lipopolysaccharide transport and assembly complex. Interacts with LptE and LptA.

The protein localises to the cell outer membrane. Its function is as follows. Together with LptE, is involved in the assembly of lipopolysaccharide (LPS) at the surface of the outer membrane. The sequence is that of LPS-assembly protein LptD from Neisseria meningitidis serogroup A / serotype 4A (strain DSM 15465 / Z2491).